A 485-amino-acid polypeptide reads, in one-letter code: UDP-glycosyltransferase 71B2 (485 aa).

UDP-alpha-D-glucose contacts are provided by residues serine 287, 354–356, 371–379, and 393–396; these read APQ, HCGWNSTLE, and YAEQ.

It belongs to the UDP-glycosyltransferase family.

Functionally, glucosyltransferase that glucosylates the cell wall inhibitor hypostatin in vivo to form a bioactive glucoside. The chain is UDP-glycosyltransferase 71B2 (UGT71B2) from Arabidopsis thaliana (Mouse-ear cress).